Consider the following 347-residue polypeptide: Major capsid protein (347 aa).

The protein belongs to the T7virus major capsid protein family. As to quaternary structure, homohexamer. Interacts with the connector protein and the minor capsid protein. Interacts with the capsid assembly scaffolding protein; capsid proteins and scaffolding proteins form building blocks that assemble to form the procapsid, each hexamer of the major capsid protein interacting with 2 scaffolding proteins.

The protein localises to the virion. In terms of biological role, assembles with the minor capsid protein to form an icosahedral capsid with a T=7 symmetry, about 60 nm in diameter, and consisting of 415 capsid proteins. The major and minor capsid proteins are incorporated into the capsid in about a 90/10 ratio respectively. Once the capsid formed, encapsidates one single copy of the viral genome. This is Major capsid protein (10) from Escherichia coli (Bacteriophage T3).